The sequence spans 200 residues: Guanylate kinase (200 aa).

Residues 6–184 (GLLIVLSGPS…AVDKLKSILL (179 aa)) form the Guanylate kinase-like domain. 13–20 (GPSGAGKG) is a binding site for ATP.

It belongs to the guanylate kinase family.

It localises to the cytoplasm. It carries out the reaction GMP + ATP = GDP + ADP. Essential for recycling GMP and indirectly, cGMP. The protein is Guanylate kinase of Desulfitobacterium hafniense (strain Y51).